Here is a 493-residue protein sequence, read N- to C-terminus: Extracellular tyrosine-protein kinase PKDCC (493 aa).

A signal peptide spans 1-32; it reads MRRRRAAVAAGFCASFLLGSVLNVLFAPGSEP. The interval 28–128 is disordered; that stretch reads PGSEPPRPGQ…PGPGSPGPGP (101 aa). The span at 30 to 46 shows a compositional bias: pro residues; that stretch reads SEPPRPGQSPEPSPAPG. The span at 52–69 shows a compositional bias: basic and acidic residues; sequence GRGELARQIRARYEEVQR. Composition is skewed to pro residues over residues 95 to 105 and 114 to 127; these read PGLPRPRPPWA and GWPP…PGPG. An N-linked (GlcNAc...) asparagine glycan is attached at asparagine 137. Residues 138–493 form the Protein kinase domain; the sequence is VSGAQYMGSG…NKTTYVKASG (356 aa). ATP contacts are provided by residues 144-152 and lysine 166; that span reads MGSGYTKAV. The residue at position 148 (tyrosine 148) is a Phosphotyrosine. A Phosphoserine modification is found at serine 177. Catalysis depends on aspartate 278, which acts as the Proton acceptor. Asparagine 320, asparagine 369, asparagine 400, asparagine 460, and asparagine 484 each carry an N-linked (GlcNAc...) asparagine glycan.

Belongs to the protein kinase superfamily. In terms of processing, N-glycosylated. Phosphorylated on tyrosines; probably via autophosphorylation. Highly expressed in platelets.

The protein localises to the secreted. It localises to the golgi apparatus. The catalysed reaction is L-tyrosyl-[protein] + ATP = O-phospho-L-tyrosyl-[protein] + ADP + H(+). Functionally, secreted tyrosine-protein kinase that mediates phosphorylation of extracellular proteins and endogenous proteins in the secretory pathway, which is essential for patterning at organogenesis stages. Mediates phosphorylation of MMP1, MMP13, MMP14, MMP19 and ERP29. Probably plays a role in platelets: rapidly and quantitatively secreted from platelets in response to stimulation of platelet degranulation. May also have serine/threonine protein kinase activity. Required for longitudinal bone growth through regulation of chondrocyte differentiation. May be indirectly involved in protein transport from the Golgi apparatus to the plasma membrane. The protein is Extracellular tyrosine-protein kinase PKDCC of Homo sapiens (Human).